A 353-amino-acid chain; its full sequence is Rhodopsin (353 aa).

Topologically, residues methionine 1–alanine 36 are extracellular. N-linked (GlcNAc...) asparagine glycans are attached at residues asparagine 2 and asparagine 15. The helical transmembrane segment at tyrosine 37–valine 61 threads the bilayer. Residues threonine 62 to asparagine 73 lie on the Cytoplasmic side of the membrane. The chain crosses the membrane as a helical span at residues tyrosine 74–tyrosine 96. Residues threonine 97 to cysteine 110 lie on the Extracellular side of the membrane. Cysteine 110 and cysteine 187 form a disulfide bridge. Residues asparagine 111 to isoleucine 133 form a helical membrane-spanning segment. Positions glutamate 134 to tryptophan 136 match the 'Ionic lock' involved in activated form stabilization motif. The Cytoplasmic segment spans residues glutamate 134–histidine 152. A helical transmembrane segment spans residues alanine 153–valine 173. The Extracellular portion of the chain corresponds to glycine 174–serine 202. Residue asparagine 200 is glycosylated (N-linked (GlcNAc...) asparagine). Residues phenylalanine 203 to glycine 224 traverse the membrane as a helical segment. Residues arginine 225–arginine 252 lie on the Cytoplasmic side of the membrane. The helical transmembrane segment at methionine 253–tryptophan 274 threads the bilayer. The Extracellular portion of the chain corresponds to isoleucine 275–valine 286. Residues phenylalanine 287 to cysteine 308 form a helical membrane-spanning segment. N6-(retinylidene)lysine is present on lysine 296. The Cytoplasmic portion of the chain corresponds to leucine 309–alanine 353. Residues cysteine 322 and cysteine 323 are each lipidated (S-palmitoyl cysteine). Positions glutamate 331–alanine 353 are disordered. Residues alanine 334–alanine 353 show a composition bias toward low complexity.

The protein belongs to the G-protein coupled receptor 1 family. Opsin subfamily. In terms of processing, phosphorylated on some or all of the serine and threonine residues present in the C-terminal region. Post-translationally, contains one covalently linked retinal chromophore.

It is found in the membrane. The protein resides in the cell projection. Its subcellular location is the cilium. The protein localises to the photoreceptor outer segment. Functionally, photoreceptor required for image-forming vision at low light intensity. While most salt water fish species use retinal as chromophore, most freshwater fish use 3-dehydroretinal, or a mixture of retinal and 3-dehydroretinal. Light-induced isomerization of 11-cis to all-trans retinal triggers a conformational change that activates signaling via G-proteins. Subsequent receptor phosphorylation mediates displacement of the bound G-protein alpha subunit by arrestin and terminates signaling. The protein is Rhodopsin (rho) of Lithognathus mormyrus (Striped seabream).